Here is a 433-residue protein sequence, read N- to C-terminus: Indole diterpene prenyltransferase terF (433 aa).

Belongs to the tryptophan dimethylallyltransferase family.

Its pathway is secondary metabolite biosynthesis. In terms of biological role, indole diterpene prenyltransferase; part of the gene cluster that mediates the biosynthesis of terpendoles, indole-diterpene (IDT) mycotoxins including terpendole I, terpendole K, terpendole C, as well as the kinesin Eg5 inhibitor terpendole E. Terpendoles biosynthesis begins with the synthesis of geranylgeranyl diphosphate (GGPP) by a yet unidentified GGPP synthase. Condensation of indole-3-glycerol phosphate with GGPP by the prenyltransferase terC then forms 3-geranylgeranylindole (3-GGI), followed by epoxidation and cyclization of this intermediate (by the FAD-dependent monooxygeanse terM and the terpene cyclase terB) to form paspaline. The cytochrome monooxygenase terQ then hydroxylates paspalline at C-11 to yield terpendole E. The cytochrome monooxygenase terP converts terpendole E to 13-desoxyterpendole I, and terQ converts 13-desoxyterpendole I into terpendole I. TerF and terK are required for conversion of terpendole I to terpendole C which is further converted to terpendole K. This chain is Indole diterpene prenyltransferase terF, found in Tolypocladium album (Soil fungus).